The following is a 157-amino-acid chain: 2-amino-4-hydroxy-6-hydroxymethyldihydropteridine pyrophosphokinase (157 aa).

It belongs to the HPPK family.

The enzyme catalyses 6-hydroxymethyl-7,8-dihydropterin + ATP = (7,8-dihydropterin-6-yl)methyl diphosphate + AMP + H(+). It participates in cofactor biosynthesis; tetrahydrofolate biosynthesis; 2-amino-4-hydroxy-6-hydroxymethyl-7,8-dihydropteridine diphosphate from 7,8-dihydroneopterin triphosphate: step 4/4. Catalyzes the transfer of pyrophosphate from adenosine triphosphate (ATP) to 6-hydroxymethyl-7,8-dihydropterin, an enzymatic step in folate biosynthesis pathway. The protein is 2-amino-4-hydroxy-6-hydroxymethyldihydropteridine pyrophosphokinase (folK) of Campylobacter jejuni subsp. jejuni serotype O:2 (strain ATCC 700819 / NCTC 11168).